A 290-amino-acid polypeptide reads, in one-letter code: 4-diphosphocytidyl-2-C-methyl-D-erythritol kinase (290 aa).

The active site involves Lys13. 96–106 (PMGGGIGGGSS) serves as a coordination point for ATP. Asp138 is an active-site residue.

The protein belongs to the GHMP kinase family. IspE subfamily.

It catalyses the reaction 4-CDP-2-C-methyl-D-erythritol + ATP = 4-CDP-2-C-methyl-D-erythritol 2-phosphate + ADP + H(+). Its pathway is isoprenoid biosynthesis; isopentenyl diphosphate biosynthesis via DXP pathway; isopentenyl diphosphate from 1-deoxy-D-xylulose 5-phosphate: step 3/6. Functionally, catalyzes the phosphorylation of the position 2 hydroxy group of 4-diphosphocytidyl-2C-methyl-D-erythritol. The sequence is that of 4-diphosphocytidyl-2-C-methyl-D-erythritol kinase from Vibrio vulnificus (strain CMCP6).